We begin with the raw amino-acid sequence, 447 residues long: Elongation factor 1-alpha (447 aa).

Residues 5 to 230 (KVHINIVVIG…DNINEPKRPS (226 aa)) form the tr-type G domain. Residues 14–21 (GHVDSGKS) form a G1 region. 14–21 (GHVDSGKS) contacts GTP. Lys55 is modified (N6,N6-dimethyllysine). Residues 70–74 (GITID) form a G2 region. Lys79 carries the N6,N6,N6-trimethyllysine modification. The tract at residues 91-94 (DAPG) is G3. GTP-binding positions include 91 to 95 (DAPGH) and 153 to 156 (NKMD). Residues 153–156 (NKMD) form a G4 region. Position 187 is an N6,N6,N6-trimethyllysine (Lys187). A G5 region spans residues 194 to 196 (SGF). Lys261 is modified (N6-methyllysine). Glu289 is modified (5-glutamyl glycerylphosphorylethanolamine). Lys306 bears the N6,N6,N6-trimethyllysine mark. A 5-glutamyl glycerylphosphorylethanolamine modification is found at Glu362. An N6,N6,N6-trimethyllysine modification is found at Lys396.

It belongs to the TRAFAC class translation factor GTPase superfamily. Classic translation factor GTPase family. EF-Tu/EF-1A subfamily.

The protein localises to the cytoplasm. Functionally, this protein promotes the GTP-dependent binding of aminoacyl-tRNA to the A-site of ribosomes during protein biosynthesis. This is Elongation factor 1-alpha from Pisum sativum (Garden pea).